A 107-amino-acid polypeptide reads, in one-letter code: Ubiquitin-related modifier 1 (107 aa).

At glycine 107 the chain carries 1-thioglycine. Glycine 107 participates in a covalent cross-link: Glycyl lysine isopeptide (Gly-Lys) (interchain with K-? in acceptor proteins).

It belongs to the URM1 family. C-terminal thiocarboxylation occurs in 2 steps, it is first acyl-adenylated (-COAMP) via the hesA/moeB/thiF part of UBA4, then thiocarboxylated (-COSH) via the rhodanese domain of UBA4.

It localises to the cytoplasm. It functions in the pathway tRNA modification; 5-methoxycarbonylmethyl-2-thiouridine-tRNA biosynthesis. Functionally, acts as a sulfur carrier required for 2-thiolation of mcm(5)S(2)U at tRNA wobble positions of cytosolic tRNA(Lys), tRNA(Glu) and tRNA(Gln). Serves as sulfur donor in tRNA 2-thiolation reaction by being thiocarboxylated (-COSH) at its C-terminus by the MOCS3 homolog UBA4. The sulfur is then transferred to tRNA to form 2-thiolation of mcm(5)S(2)U. Prior mcm(5) tRNA modification by the elongator complex is required for 2-thiolation. Also acts as a ubiquitin-like protein (UBL) that is covalently conjugated via an isopeptide bond to lysine residues of target proteins such as AHP1. The thiocarboxylated form serves as substrate for conjugation and oxidative stress specifically induces the formation of UBL-protein conjugates. The chain is Ubiquitin-related modifier 1 from Mycosarcoma maydis (Corn smut fungus).